The chain runs to 423 residues: Gamma-glutamyl phosphate reductase (423 aa).

This sequence belongs to the gamma-glutamyl phosphate reductase family.

It is found in the cytoplasm. The catalysed reaction is L-glutamate 5-semialdehyde + phosphate + NADP(+) = L-glutamyl 5-phosphate + NADPH + H(+). The protein operates within amino-acid biosynthesis; L-proline biosynthesis; L-glutamate 5-semialdehyde from L-glutamate: step 2/2. Its function is as follows. Catalyzes the NADPH-dependent reduction of L-glutamate 5-phosphate into L-glutamate 5-semialdehyde and phosphate. The product spontaneously undergoes cyclization to form 1-pyrroline-5-carboxylate. The chain is Gamma-glutamyl phosphate reductase from Pseudomonas putida (strain GB-1).